A 224-amino-acid polypeptide reads, in one-letter code: Viral late gene transcription factor 3 (224 aa).

A zinc finger lies at 6-26 (CSGCRHNGIVSEQGYEYCIFC).

This sequence belongs to the orthopoxvirus VLTF-3/OPG127 family. As to quaternary structure, interacts with the late transcription elongation factor VLTF-4/OPG110. Interacts with the late transcription factors VLTF-1/OPG093.

Acts with RNA polymerase to initiate transcription from late gene promoters. This Vaccinia virus (strain Ankara) (VACV) protein is Viral late gene transcription factor 3 (OPG127).